Consider the following 41-residue polypeptide: Large ribosomal subunit protein bL36 (41 aa).

Belongs to the bacterial ribosomal protein bL36 family.

The protein is Large ribosomal subunit protein bL36 of Rhodopseudomonas palustris (strain TIE-1).